The primary structure comprises 473 residues: Dihydrolipoyl dehydrogenase (473 aa).

Residues 36-45, Lys-54, and Ala-117 contribute to the FAD site; that span reads ERYDKLGGVC. Cys-45 and Cys-50 are oxidised to a cystine. NAD(+) contacts are provided by residues 182–186, Asp-205, and 270–273; these read GSGII and AIGR. FAD-binding residues include Asp-313 and Ala-321. His-445 functions as the Proton acceptor in the catalytic mechanism.

The protein belongs to the class-I pyridine nucleotide-disulfide oxidoreductase family. Homodimer. The cofactor is FAD.

The protein resides in the cytoplasm. It catalyses the reaction N(6)-[(R)-dihydrolipoyl]-L-lysyl-[protein] + NAD(+) = N(6)-[(R)-lipoyl]-L-lysyl-[protein] + NADH + H(+). Lipoamide dehydrogenase is a component of the alpha-ketoacid dehydrogenase complexes. This is Dihydrolipoyl dehydrogenase (lpdA) from Buchnera aphidicola subsp. Acyrthosiphon pisum (strain APS) (Acyrthosiphon pisum symbiotic bacterium).